We begin with the raw amino-acid sequence, 288 residues long: 4-diphosphocytidyl-2-C-methyl-D-erythritol kinase (288 aa).

The active site involves K8. ATP is bound at residue 92-102 (PVAAGMAGGST). D134 is an active-site residue.

It belongs to the GHMP kinase family. IspE subfamily.

The enzyme catalyses 4-CDP-2-C-methyl-D-erythritol + ATP = 4-CDP-2-C-methyl-D-erythritol 2-phosphate + ADP + H(+). The protein operates within isoprenoid biosynthesis; isopentenyl diphosphate biosynthesis via DXP pathway; isopentenyl diphosphate from 1-deoxy-D-xylulose 5-phosphate: step 3/6. Catalyzes the phosphorylation of the position 2 hydroxy group of 4-diphosphocytidyl-2C-methyl-D-erythritol. The protein is 4-diphosphocytidyl-2-C-methyl-D-erythritol kinase of Clostridium perfringens (strain SM101 / Type A).